The sequence spans 1229 residues: DNA-directed RNA polymerase subunit beta (1229 aa).

Belongs to the RNA polymerase beta chain family. As to quaternary structure, the RNAP catalytic core consists of 2 alpha, 1 beta, 1 beta' and 1 omega subunit. When a sigma factor is associated with the core the holoenzyme is formed, which can initiate transcription.

It catalyses the reaction RNA(n) + a ribonucleoside 5'-triphosphate = RNA(n+1) + diphosphate. DNA-dependent RNA polymerase catalyzes the transcription of DNA into RNA using the four ribonucleoside triphosphates as substrates. The polypeptide is DNA-directed RNA polymerase subunit beta (Roseiflexus sp. (strain RS-1)).